Here is a 425-residue protein sequence, read N- to C-terminus: Trigger factor (425 aa).

The region spanning 163–248 (GDTAVIDFEG…VHEIKTKELP (86 aa)) is the PPIase FKBP-type domain.

Belongs to the FKBP-type PPIase family. Tig subfamily.

It localises to the cytoplasm. The enzyme catalyses [protein]-peptidylproline (omega=180) = [protein]-peptidylproline (omega=0). In terms of biological role, involved in protein export. Acts as a chaperone by maintaining the newly synthesized protein in an open conformation. Functions as a peptidyl-prolyl cis-trans isomerase. In Bacillus cereus (strain Q1), this protein is Trigger factor.